Here is a 158-residue protein sequence, read N- to C-terminus: uncharacterized protein (158 aa).

Helical transmembrane passes span 10–30 (LSSL…QFIV) and 137–157 (IEVF…AYFF).

Its subcellular location is the cell membrane. This is an uncharacterized protein from Bacillus subtilis (strain 168).